Consider the following 765-residue polypeptide: Phosphoribosylformylglycinamidine synthase subunit PurL (765 aa).

The active site involves histidine 59. The ATP site is built by tyrosine 62 and lysine 104. Position 106 (glutamate 106) interacts with Mg(2+). Residues serine 107–histidine 110 and arginine 129 each bind substrate. The Proton acceptor role is filled by histidine 108. A Mg(2+)-binding site is contributed by aspartate 130. Glutamine 254 is a binding site for substrate. Aspartate 282 is a binding site for Mg(2+). Glutamate 326 to glutamine 328 contacts substrate. Asparagine 522 and glycine 559 together coordinate ATP. Asparagine 560 contacts Mg(2+). Serine 562 provides a ligand contact to substrate.

Belongs to the FGAMS family. As to quaternary structure, monomer. Part of the FGAM synthase complex composed of 1 PurL, 1 PurQ and 2 PurS subunits.

The protein localises to the cytoplasm. It carries out the reaction N(2)-formyl-N(1)-(5-phospho-beta-D-ribosyl)glycinamide + L-glutamine + ATP + H2O = 2-formamido-N(1)-(5-O-phospho-beta-D-ribosyl)acetamidine + L-glutamate + ADP + phosphate + H(+). It functions in the pathway purine metabolism; IMP biosynthesis via de novo pathway; 5-amino-1-(5-phospho-D-ribosyl)imidazole from N(2)-formyl-N(1)-(5-phospho-D-ribosyl)glycinamide: step 1/2. Part of the phosphoribosylformylglycinamidine synthase complex involved in the purines biosynthetic pathway. Catalyzes the ATP-dependent conversion of formylglycinamide ribonucleotide (FGAR) and glutamine to yield formylglycinamidine ribonucleotide (FGAM) and glutamate. The FGAM synthase complex is composed of three subunits. PurQ produces an ammonia molecule by converting glutamine to glutamate. PurL transfers the ammonia molecule to FGAR to form FGAM in an ATP-dependent manner. PurS interacts with PurQ and PurL and is thought to assist in the transfer of the ammonia molecule from PurQ to PurL. The chain is Phosphoribosylformylglycinamidine synthase subunit PurL from Thermobifida fusca (strain YX).